Reading from the N-terminus, the 631-residue chain is Phosphomethylpyrimidine synthase (631 aa).

Substrate contacts are provided by residues Asn239, Met268, Tyr297, His333, 353-355 (SRG), 394-397 (DGLR), and Glu433. His437 lines the Zn(2+) pocket. Tyr460 lines the substrate pocket. His501 is a Zn(2+) binding site. 3 residues coordinate [4Fe-4S] cluster: Cys581, Cys584, and Cys589.

Belongs to the ThiC family. In terms of assembly, homodimer. [4Fe-4S] cluster serves as cofactor.

The enzyme catalyses 5-amino-1-(5-phospho-beta-D-ribosyl)imidazole + S-adenosyl-L-methionine = 4-amino-2-methyl-5-(phosphooxymethyl)pyrimidine + CO + 5'-deoxyadenosine + formate + L-methionine + 3 H(+). It functions in the pathway cofactor biosynthesis; thiamine diphosphate biosynthesis. Catalyzes the synthesis of the hydroxymethylpyrimidine phosphate (HMP-P) moiety of thiamine from aminoimidazole ribotide (AIR) in a radical S-adenosyl-L-methionine (SAM)-dependent reaction. The sequence is that of Phosphomethylpyrimidine synthase from Salmonella paratyphi A (strain AKU_12601).